The sequence spans 97 residues: Stefin-1 (97 aa).

Residues 46 to 50 carry the Secondary area of contact motif; sequence QVVAG.

Belongs to the cystatin family.

It is found in the cytoplasm. In terms of biological role, this is an intracellular thiol proteinase inhibitor. This chain is Stefin-1 (Stfa1), found in Mus musculus (Mouse).